We begin with the raw amino-acid sequence, 239 residues long: Probable transcriptional regulatory protein MG332 (239 aa).

It belongs to the TACO1 family.

The protein localises to the cytoplasm. The polypeptide is Probable transcriptional regulatory protein MG332 (Mycoplasma genitalium (strain ATCC 33530 / DSM 19775 / NCTC 10195 / G37) (Mycoplasmoides genitalium)).